We begin with the raw amino-acid sequence, 239 residues long: LGLMEVHFVAAAWQAVEPSDIAVCFREAGFGGGPNATITTALKSEGEEEEEEEEEEEEEEGEGEEEEEEDGEEEEEAGEGEELGEEEEVEEEGDVDTVEEEEEEEEESSSEGLEAEDWAQGVVEAGGSFGGYGAQEEAQCPTLHFLEGEEDSESDSEEEEEDDDEDEDDEDDEEEDDEVPVPSFGEAMAYFAMVKRYLTSSPIDDRVQSHILHLEHDLVHVTRKNHARQAGARGLGHQS.

The tract at residues 28-185 (AGFGGGPNAT…DDEVPVPSFG (158 aa)) is disordered. Residues Thr37 and Thr39 each carry the phosphothreonine modification. Composition is skewed to acidic residues over residues 46 to 117 (GEEE…EAED) and 148 to 179 (GEED…DDEV). A homodimerization region spans residues 176 to 239 (DDEVPVPSFG…AGARGLGHQS (64 aa)).

As to quaternary structure, antiparallel homodimer. Interacts with CENPT. Identified in a centromere complex containing histones H2A, H2B and H4, and at least CENPA, CENPB, CENPC, CENPT, CENPN, HJURP, SUPT16H, SSRP1 and RSF1. Poly-ADP-ribosylated by PARP1. In terms of processing, N-terminally methylated by METTL11A/NTM1. Alpha-N-methylation is stimulated in response extracellular stimuli, including increased cell density and heat shock, and seems to facilitate binding to CENP-B boxes. Chromatin-bound CENP-B is primarily trimethylated.

It localises to the nucleus. The protein localises to the chromosome. Its subcellular location is the centromere. Its function is as follows. Interacts with centromeric heterochromatin in chromosomes and binds to a specific 17 bp subset of alphoid satellite DNA, called the CENP-B box. May organize arrays of centromere satellite DNA into a higher-order structure which then directs centromere formation and kinetochore assembly in mammalian chromosomes. This is Major centromere autoantigen B (CENPB) from Ovis aries (Sheep).